The sequence spans 451 residues: MPREIITLQLGQCGNQIGFEFWKQLCAEHGISPEGIVEEFATEGTDRKDVFFYQADDEHYIPRAVLLDLEPRVIHSILNSPYAKLYNPENIYLSEHGGGAGNNWASGFSQGEKIHEDIFDIIDREADGSDSLEGFVLCHSIAGGTGSGLGSYLLERLNDRYPKKLVQTYSVFPYQDEMSDVVVQPYNSLLTLKRLTQNADCVVVLDNTALNRIATDRLHIQNPSFSQINQLVSTIMSASTTTLRYPGYMNNDLIGLIASLIPTPRLHFLMTGYTPLTTDQSVASVRKTTVLDVMRRLLQPKNVMVSTGRDRQTNHCYIAILNIIQGEVDPTQVHKSLQRIRERKLANFIPWGPASIQVALSRKSPYLPSAHRVSGLMMANHTSISSLFESSCQQFDKLRKRDAFLEQFRKEDMFKDNFDEMDRSREVVQELIDEYHAATQPDYISWGTQEQ.

Residue S131 is modified to Phosphoserine; by BRSK1. 142-148 (AGGTGSG) is a binding site for GTP.

This sequence belongs to the tubulin family. As to quaternary structure, component of the gamma-tubulin ring complex (gTuRC) consisting of TUBGCP2, TUBGCP3, TUBGCP4, TUBGCP5 and TUBGCP6 and gamma-tubulin TUBG1 or TUBG2. TUBGCP2, TUBGCP3, TUBGCP4, TUBGCP5 and TUBGCP6 assemble in a 5:5:2:1:1 stoichiometry; each is associated with a gamma-tubulin, thereby arranging 14 gamma-tubulins in a helical manner. Gamma-tubulin at the first position is blocked by TUBGCP3 at the last position, allowing 13 protafilaments to grow into a microtubule. Interacts with alpha-beta tubulin heterodimers; the interaction allows microtubules to nucleate from the gTuRC. Phosphorylation at Ser-131 by BRSK1 regulates centrosome duplication, possibly by mediating relocation of gamma-tubulin and its associated proteins from the cytoplasm to the centrosome.

It localises to the cytoplasm. The protein resides in the cytoskeleton. The protein localises to the microtubule organizing center. Its subcellular location is the centrosome. In terms of biological role, tubulin is the major constituent of microtubules, protein filaments consisting of alpha- and beta-tubulin heterodimers. Gamma-tubulin is a key component of the gamma-tubulin ring complex (gTuRC) which mediates microtubule nucleation. The gTuRC regulates the minus-end nucleation of alpha-beta tubulin heterodimers that grow into microtubule protafilaments, a critical step in centrosome duplication and spindle formation. In Homo sapiens (Human), this protein is Tubulin gamma-2 chain (TUBG2).